Here is a 166-residue protein sequence, read N- to C-terminus: Large ribosomal subunit protein uL10 (166 aa).

Belongs to the universal ribosomal protein uL10 family. As to quaternary structure, part of the ribosomal stalk of the 50S ribosomal subunit. The N-terminus interacts with L11 and the large rRNA to form the base of the stalk. The C-terminus forms an elongated spine to which L12 dimers bind in a sequential fashion forming a multimeric L10(L12)X complex.

In terms of biological role, forms part of the ribosomal stalk, playing a central role in the interaction of the ribosome with GTP-bound translation factors. In Lysinibacillus sphaericus (strain C3-41), this protein is Large ribosomal subunit protein uL10.